The following is a 328-amino-acid chain: Complex I intermediate-associated protein 30, mitochondrial (328 aa).

The transit peptide at 1 to 24 directs the protein to the mitochondrion; sequence MSSIHKLLTGIYIHKNFLRPRAAL. Over residues 44–54 the composition is skewed to polar residues; that stretch reads VTSVDRASQQG. Positions 44 to 80 are disordered; that stretch reads VTSVDRASQQGKTEEGLQGHDHKEVALDAPSPDRTPE. Positions 55–69 are enriched in basic and acidic residues; it reads KTEEGLQGHDHKEVA. The residue at position 319 (Ser-319) is a Phosphoserine.

It belongs to the CIA30 family. As to quaternary structure, part of the mitochondrial complex I assembly/MCIA complex that comprises at least the core subunits TMEM126B, NDUFAF1, ECSIT and ACAD9 and complement subunits such as COA1 and TMEM186. Interacts with ECSIT. Interacts with ACAD9. At early stages of complex I assembly, it is found in intermediate subcomplexes that contain different subunits including NDUFB6, NDUFA6, NDUFA9, NDUFS3, NDUFS7, ND1, ND2 and ND3. Interacts with TMEM70 and TMEM242.

The protein localises to the mitochondrion. The protein resides in the mitochondrion matrix. In terms of biological role, as part of the MCIA complex, involved in the assembly of the mitochondrial complex I. This chain is Complex I intermediate-associated protein 30, mitochondrial, found in Mus musculus (Mouse).